A 61-amino-acid chain; its full sequence is Large ribosomal subunit protein uL30 (61 aa).

It belongs to the universal ribosomal protein uL30 family. As to quaternary structure, part of the 50S ribosomal subunit.

This Chlorobaculum tepidum (strain ATCC 49652 / DSM 12025 / NBRC 103806 / TLS) (Chlorobium tepidum) protein is Large ribosomal subunit protein uL30.